A 153-amino-acid polypeptide reads, in one-letter code: Large ribosomal subunit protein uL30 (153 aa).

The protein belongs to the universal ribosomal protein uL30 family. As to quaternary structure, part of the 50S ribosomal subunit.

The sequence is that of Large ribosomal subunit protein uL30 from Methanosarcina acetivorans (strain ATCC 35395 / DSM 2834 / JCM 12185 / C2A).